The sequence spans 238 residues: Ribonuclease PH (238 aa).

Residues arginine 86 and 124–126 contribute to the phosphate site; that span reads GTR.

This sequence belongs to the RNase PH family. In terms of assembly, homohexameric ring arranged as a trimer of dimers.

It catalyses the reaction tRNA(n+1) + phosphate = tRNA(n) + a ribonucleoside 5'-diphosphate. In terms of biological role, phosphorolytic 3'-5' exoribonuclease that plays an important role in tRNA 3'-end maturation. Removes nucleotide residues following the 3'-CCA terminus of tRNAs; can also add nucleotides to the ends of RNA molecules by using nucleoside diphosphates as substrates, but this may not be physiologically important. Probably plays a role in initiation of 16S rRNA degradation (leading to ribosome degradation) during starvation. The polypeptide is Ribonuclease PH (Serratia proteamaculans (strain 568)).